The sequence spans 224 residues: Protein-L-isoaspartate O-methyltransferase (224 aa).

Residue Ser-63 is part of the active site.

Belongs to the methyltransferase superfamily. L-isoaspartyl/D-aspartyl protein methyltransferase family.

It localises to the cytoplasm. The enzyme catalyses [protein]-L-isoaspartate + S-adenosyl-L-methionine = [protein]-L-isoaspartate alpha-methyl ester + S-adenosyl-L-homocysteine. Catalyzes the methyl esterification of L-isoaspartyl residues in peptides and proteins that result from spontaneous decomposition of normal L-aspartyl and L-asparaginyl residues. It plays a role in the repair and/or degradation of damaged proteins. This Herpetosiphon aurantiacus (strain ATCC 23779 / DSM 785 / 114-95) protein is Protein-L-isoaspartate O-methyltransferase.